We begin with the raw amino-acid sequence, 321 residues long: MSTEHVDHKTIARFAEDKVNLPKVKADDFREQAKRLQNKLEGYLSDHPDFSLKRMIPSGSLAKGTALRSLNDIDVAVYISGSDAPQDLRGLLDYLADRLRKAFPNFSPDQVKPQTYSVTVSFRGSGLDVDIVPVLYSGLPDWRGHLISQEDGSFLETSIPLHLDFIKARKRAAPKHFAQVVRLAKYWARLMKQERPNFRFKSFMIELILAKLLDNGVDFSNYPEALQAFFSYLVSTELRERIVFEDNYPASKIGTLSDLVQIIDPVNPVNNVARLYTQSNVDAIIDAAMDAGDAIDAAFYAPTKQLTVTYWQKVFGSSFQG.

Lys-63 contacts ATP. Mg(2+) is bound by residues Asp-72 and Asp-74. ATP-binding positions include Asp-74, His-162, Lys-185, 201-203 (KSF), and Asn-270.

This sequence belongs to the CD-NTase family. A01 subfamily. Forms complexes with Cap7 with 1:1 and 2:2 stoichimetry, and a 1:1:6 CdnC:Cap7:Cap6 complex. Mg(2+) serves as cofactor.

The enzyme catalyses 3 ATP = 3',3',3'-c-tri-AMP + 3 diphosphate. The catalysed reaction is 2 ATP = 3',3'-c-di-AMP + 2 diphosphate. Its activity is regulated as follows. The 2:2 CdnC:Cap7 (Cap7 is also called HORMA) complex is activated for cAAA synthesis by long dsDNA, but not 40 bp dsDNA or ssDNA; the 1:1 complex is inactive in vitro. The 2:2:DNA complex is catalytically disassembled and inactivated by Cap6 (also called Trip13). Cyclic nucleotide synthase (second messenger synthase) of a CBASS antivirus system. CBASS (cyclic oligonucleotide-based antiphage signaling system) provides immunity against bacteriophage. The CD-NTase protein synthesizes cyclic nucleotides in response to infection; these serve as specific second messenger signals. The signals activate a diverse range of effectors, leading to bacterial cell death and thus abortive phage infection. A type III-C(AAA) CBASS system. Its function is as follows. Cyclic nucleotide synthase that upon activation catalyzes the synthesis of 3',3',3'-cyclic AMP-AMP-AMP (3',3',3'-c-tri-AMP or cAAA) as the major product, and 3',3'-c-di-AMP as a minor product. Cannot use GTP as a substrate. In terms of biological role, protects E.coli strain JP313 against bacteriophage lambda cI- infection. When the cdnC-cap7-cap6-nucC operon is transformed into a susceptible strain it confers bacteriophage immunity. Mutations in the sensor (Cap7 also called HORMA) or effector proteins (CdnC, NucC) but not the disassembly protein (Cap6 also called Trip13) no longer confer immunity. The presence of the intact operon leads to culture collapse and cell death, which occurs before the phage has finished its replication cycle, thus protecting non-infected bacteria by aborting the phage infection and preventing its propagation. This Escherichia coli (strain MS 115-1) protein is Cyclic AMP-AMP-AMP synthase.